Reading from the N-terminus, the 82-residue chain is Delta-actitoxin-Aeq2c (82 aa).

The first 19 residues, 1 to 19 (MNRLMILVFAAVFLALASA), serve as a signal peptide directing secretion. Residues 20–26 (DEDVDIA) constitute a propeptide that is removed on maturation. Intrachain disulfides connect Cys-32–Cys-79, Cys-34–Cys-69, and Cys-62–Cys-80.

This sequence belongs to the sea anemone sodium channel inhibitory toxin family. Type I subfamily.

The protein localises to the secreted. Its subcellular location is the nematocyst. Binds specifically to voltage-gated sodium channels (Nav), thereby delaying their inactivation during signal transduction. Causes death to crabs. The sequence is that of Delta-actitoxin-Aeq2c from Actinia equina (Beadlet anemone).